The sequence spans 383 residues: 3-phytase (383 aa).

Positions 1–26 (MNHSKTLLLTAAAGLMLTCGAVSSQA) are cleaved as a signal peptide. Residues 27–29 (KHK) constitute a propeptide that is removed on maturation. Residues 30–362 (LSDPYHFTVN…VPWERIADQI (333 aa)) form the BPP domain.

Ca(2+) serves as cofactor.

The protein localises to the secreted. The catalysed reaction is 1D-myo-inositol hexakisphosphate + H2O = 1D-myo-inositol 1,2,4,5,6-pentakisphosphate + phosphate. In terms of biological role, catalyzes the hydrolysis of inorganic orthophosphate from phytate. Only phytate, ADP, and ATP were hydrolyzed (100, 75, and 50% of the relative activity, respectively). The sequence is that of 3-phytase (phyC) from Bacillus subtilis.